A 395-amino-acid chain; its full sequence is Formate-dependent phosphoribosylglycinamide formyltransferase (395 aa).

N(1)-(5-phospho-beta-D-ribosyl)glycinamide contacts are provided by residues Glu-22–Leu-23 and Glu-82. ATP contacts are provided by residues Arg-115, Lys-156, Ser-161–Gln-166, Glu-196–Ile-199, and Glu-204. Residues Arg-120–Leu-309 form the ATP-grasp domain. 2 residues coordinate Mg(2+): Glu-268 and Glu-280. N(1)-(5-phospho-beta-D-ribosyl)glycinamide contacts are provided by residues Asp-287, Lys-356, and Arg-363–Arg-364.

It belongs to the PurK/PurT family. In terms of assembly, homodimer.

It catalyses the reaction N(1)-(5-phospho-beta-D-ribosyl)glycinamide + formate + ATP = N(2)-formyl-N(1)-(5-phospho-beta-D-ribosyl)glycinamide + ADP + phosphate + H(+). Its pathway is purine metabolism; IMP biosynthesis via de novo pathway; N(2)-formyl-N(1)-(5-phospho-D-ribosyl)glycinamide from N(1)-(5-phospho-D-ribosyl)glycinamide (formate route): step 1/1. In terms of biological role, involved in the de novo purine biosynthesis. Catalyzes the transfer of formate to 5-phospho-ribosyl-glycinamide (GAR), producing 5-phospho-ribosyl-N-formylglycinamide (FGAR). Formate is provided by PurU via hydrolysis of 10-formyl-tetrahydrofolate. This chain is Formate-dependent phosphoribosylglycinamide formyltransferase, found in Stenotrophomonas maltophilia (strain R551-3).